A 208-amino-acid polypeptide reads, in one-letter code: Glutathione S-transferase 1-1 (208 aa).

Residues 1 to 80 form the GST N-terminal domain; that stretch reads MDFYYLPGSA…YLVEKYGKND (80 aa). Glutathione contacts are provided by residues Ser9, 50–52, and 64–66; these read HTI and ESR. A GST C-terminal domain is found at 86-207; it reads CPKKRAVINQ…EGCLEFKKFF (122 aa).

The protein belongs to the GST superfamily. Theta family. As to quaternary structure, homodimer.

The enzyme catalyses RX + glutathione = an S-substituted glutathione + a halide anion + H(+). Its function is as follows. Conjugation of reduced glutathione to a wide number of exogenous and endogenous hydrophobic electrophiles. The protein is Glutathione S-transferase 1-1 (GST1) of Lucilia cuprina (Green bottle fly).